A 312-amino-acid polypeptide reads, in one-letter code: Carbonic anhydrase 4 (312 aa).

The N-terminal stretch at 1–18 is a signal peptide; that stretch reads MRLLLALLVLAAAPPQAR. One can recognise an Alpha-carbonic anhydrase domain in the interval 21–285; that stretch reads SHWCYQIQVK…LGQRQVFRSG (265 aa). 2 cysteine pairs are disulfide-bonded: cysteine 24/cysteine 36 and cysteine 46/cysteine 229. N-linked (GlcNAc...) asparagine glycosylation occurs at asparagine 33. The active-site Proton donor/acceptor is the histidine 88. The Zn(2+) site is built by histidine 115, histidine 117, and histidine 140. Residues asparagine 152 and asparagine 195 are each glycosylated (N-linked (GlcNAc...) asparagine). 225 to 226 lines the substrate pocket; sequence TT. Asparagine 265 carries N-linked (GlcNAc...) asparagine glycosylation. Serine 284 carries GPI-anchor amidated serine lipidation. Positions 285–312 are cleaved as a propeptide — removed in mature form; it reads GAPGLLLAQPLPTLLAPVLACLTVGFLR.

The protein belongs to the alpha-carbonic anhydrase family. As to quaternary structure, interacts with SLC4A4. Requires Zn(2+) as cofactor.

Its subcellular location is the cell membrane. The enzyme catalyses hydrogencarbonate + H(+) = CO2 + H2O. With respect to regulation, inhibited by acetazolamide. Functionally, catalyzes the reversible hydration of carbon dioxide into bicarbonate and protons and thus is essential to maintaining intracellular and extracellular pH. May stimulate the sodium/bicarbonate transporter activity of SLC4A4 that acts in pH homeostasis. It is essential for acid overload removal from the retina and retina epithelium, and acid release in the choriocapillaris in the choroid. The polypeptide is Carbonic anhydrase 4 (CA4) (Bos taurus (Bovine)).